Here is a 447-residue protein sequence, read N- to C-terminus: Cysteine--tRNA ligase (447 aa).

Zn(2+) is bound at residue cysteine 28. Residues 30–40 (PTVYNYIHVGN) carry the 'HIGH' region motif. Cysteine 211, histidine 236, and glutamate 240 together coordinate Zn(2+). Positions 268–272 (KMSKS) match the 'KMSKS' region motif. Lysine 271 contributes to the ATP binding site.

The protein belongs to the class-I aminoacyl-tRNA synthetase family. As to quaternary structure, monomer. Zn(2+) serves as cofactor.

The protein resides in the cytoplasm. It catalyses the reaction tRNA(Cys) + L-cysteine + ATP = L-cysteinyl-tRNA(Cys) + AMP + diphosphate. In Streptococcus pneumoniae serotype 4 (strain ATCC BAA-334 / TIGR4), this protein is Cysteine--tRNA ligase.